The sequence spans 220 residues: Competence protein ComFC (220 aa).

The protein belongs to the ComF/GntX family. As to quaternary structure, monomer and dimer in solution. Interacts with ComFA and DprA; ComFA-ComFC form rings about 150 Angstroms in diameter with apparent 6-fold symmetry.

In terms of biological role, involved in transformation (genetic competence for DNA uptake). The polypeptide is Competence protein ComFC (Streptococcus pneumoniae (strain ATCC BAA-255 / R6)).